The primary structure comprises 207 residues: Pyridoxal 5'-phosphate synthase subunit PdxT (207 aa).

Residue 53 to 55 (GES) participates in L-glutamine binding. Cysteine 85 (nucleophile) is an active-site residue. L-glutamine is bound by residues arginine 114 and 143–144 (IR). Catalysis depends on charge relay system residues histidine 184 and glutamate 186.

Belongs to the glutaminase PdxT/SNO family. As to quaternary structure, in the presence of PdxS, forms a dodecamer of heterodimers. Only shows activity in the heterodimer.

The catalysed reaction is aldehydo-D-ribose 5-phosphate + D-glyceraldehyde 3-phosphate + L-glutamine = pyridoxal 5'-phosphate + L-glutamate + phosphate + 3 H2O + H(+). It carries out the reaction L-glutamine + H2O = L-glutamate + NH4(+). Its pathway is cofactor biosynthesis; pyridoxal 5'-phosphate biosynthesis. Catalyzes the hydrolysis of glutamine to glutamate and ammonia as part of the biosynthesis of pyridoxal 5'-phosphate. The resulting ammonia molecule is channeled to the active site of PdxS. This Acidothermus cellulolyticus (strain ATCC 43068 / DSM 8971 / 11B) protein is Pyridoxal 5'-phosphate synthase subunit PdxT.